Here is a 484-residue protein sequence, read N- to C-terminus: UDP-N-acetylmuramoyl-L-alanyl-D-glutamate--2,6-diaminopimelate ligase (484 aa).

Ser29 is a binding site for UDP-N-acetyl-alpha-D-muramoyl-L-alanyl-D-glutamate. 108–114 (GTSGKTS) is a binding site for ATP. Residues 150 to 151 (TT), Ser177, Gln183, and Arg185 each bind UDP-N-acetyl-alpha-D-muramoyl-L-alanyl-D-glutamate. Lys217 is modified (N6-carboxylysine). Meso-2,6-diaminopimelate is bound by residues Arg381, 405-408 (DNPR), Gly453, and Glu457. The short motif at 405–408 (DNPR) is the Meso-diaminopimelate recognition motif element.

This sequence belongs to the MurCDEF family. MurE subfamily. The cofactor is Mg(2+). In terms of processing, carboxylation is probably crucial for Mg(2+) binding and, consequently, for the gamma-phosphate positioning of ATP.

It is found in the cytoplasm. The catalysed reaction is UDP-N-acetyl-alpha-D-muramoyl-L-alanyl-D-glutamate + meso-2,6-diaminopimelate + ATP = UDP-N-acetyl-alpha-D-muramoyl-L-alanyl-gamma-D-glutamyl-meso-2,6-diaminopimelate + ADP + phosphate + H(+). It functions in the pathway cell wall biogenesis; peptidoglycan biosynthesis. In terms of biological role, catalyzes the addition of meso-diaminopimelic acid to the nucleotide precursor UDP-N-acetylmuramoyl-L-alanyl-D-glutamate (UMAG) in the biosynthesis of bacterial cell-wall peptidoglycan. This Mesorhizobium japonicum (strain LMG 29417 / CECT 9101 / MAFF 303099) (Mesorhizobium loti (strain MAFF 303099)) protein is UDP-N-acetylmuramoyl-L-alanyl-D-glutamate--2,6-diaminopimelate ligase.